The sequence spans 167 residues: MLVNEGIRAREVRLVGANGDQIGVKSKHEALEMAQRVNLDLVCVAPNAKPPVCRIMDYGKYRYEQQKKEKEARKNQKVITIKEVRLSPTIEANDFNTKLRNARKFLEKGDKVKASIRFRGRAITHSQIGRDVLERLAKECEDIATIEARPKMEGRSMFLVMAPKTEK.

The protein belongs to the IF-3 family. In terms of assembly, monomer.

It is found in the cytoplasm. IF-3 binds to the 30S ribosomal subunit and shifts the equilibrium between 70S ribosomes and their 50S and 30S subunits in favor of the free subunits, thus enhancing the availability of 30S subunits on which protein synthesis initiation begins. The chain is Translation initiation factor IF-3 from Shouchella clausii (strain KSM-K16) (Alkalihalobacillus clausii).